The primary structure comprises 633 residues: Pentatricopeptide repeat-containing protein At3g24000, mitochondrial (633 aa).

The N-terminal 63 residues, 1-63, are a transit peptide targeting the mitochondrion; the sequence is MALRFPPRLL…SYIPADRRFY (63 aa). PPR repeat units lie at residues 94–124, 125–159, 160–194, 195–225, 226–260, 261–295, 296–326, 327–361, 362–396, and 397–431; these read DIVM…MPQR, DFVT…GYSP, NEFT…GFDS, NVHV…LESR, NDVS…GFRP, SHFS…GEKL, VAFA…LAKR, DVVS…GIRP, NEIS…GIVP, and EAWH…PTAA. The segment at 432-507 is type E motif; it reads IWKALLNACR…EPACSWVEIE (76 aa). The tract at residues 508–538 is type E(+) motif; that stretch reads NAIHMFVANDERHPQREEIARKWEEVLAKIK. A type DYW motif region spans residues 539-633; the sequence is ELGYVPDTSH…DGNCSCKDYW (95 aa).

The protein belongs to the PPR family. PCMP-H subfamily.

The protein resides in the mitochondrion. This is Pentatricopeptide repeat-containing protein At3g24000, mitochondrial (PCMP-H87) from Arabidopsis thaliana (Mouse-ear cress).